A 375-amino-acid chain; its full sequence is tRNA-specific 2-thiouridylase MnmA (375 aa).

Residues 12 to 19 (GMSGGVDS) and M38 contribute to the ATP site. Residues 98–100 (NPD) are interaction with target base in tRNA. C103 functions as the Nucleophile in the catalytic mechanism. C103 and C200 form a disulfide bridge. Residue G127 participates in ATP binding. Residues 150-152 (KDQ) are interaction with tRNA. The Cysteine persulfide intermediate role is filled by C200. An interaction with tRNA region spans residues 312–313 (RY).

The protein belongs to the MnmA/TRMU family.

The protein localises to the cytoplasm. The enzyme catalyses S-sulfanyl-L-cysteinyl-[protein] + uridine(34) in tRNA + AH2 + ATP = 2-thiouridine(34) in tRNA + L-cysteinyl-[protein] + A + AMP + diphosphate + H(+). Catalyzes the 2-thiolation of uridine at the wobble position (U34) of tRNA, leading to the formation of s(2)U34. The chain is tRNA-specific 2-thiouridylase MnmA from Ligilactobacillus salivarius (strain UCC118) (Lactobacillus salivarius).